Consider the following 199-residue polypeptide: V-type ATP synthase subunit E (199 aa).

This sequence belongs to the V-ATPase E subunit family.

In terms of biological role, produces ATP from ADP in the presence of a proton gradient across the membrane. The protein is V-type ATP synthase subunit E (atpE) of Borreliella burgdorferi (strain ATCC 35210 / DSM 4680 / CIP 102532 / B31) (Borrelia burgdorferi).